A 361-amino-acid chain; its full sequence is Cell cycle control protein 50A (361 aa).

The interval 1–28 is disordered; that stretch reads MAMNYNAKDEVDGGPPCPPGGTAKTRRP. At alanine 2 the chain carries N-acetylalanine. Residues 2–48 form a required for ATPase and aminophospholipid flippase activity region; sequence AMNYNAKDEVDGGPPCPPGGTAKTRRPDNTAFKQQRLPAWQPILTAG. Over 2 to 49 the chain is Cytoplasmic; that stretch reads AMNYNAKDEVDGGPPCPPGGTAKTRRPDNTAFKQQRLPAWQPILTAGT. The segment at 49-348 is interaction with ATP8A2; the sequence is TVLPTFFIIG…LGVVLLVINH (300 aa). A helical membrane pass occupies residues 50 to 70; the sequence is VLPTFFIIGLIFIPIGIGIFV. Residues 71–325 are Exoplasmic loop-facing; sequence TSNNIREIEI…SWMGGKNPFL (255 aa). Cystine bridges form between cysteine 91–cysteine 104, cysteine 94–cysteine 102, and cysteine 157–cysteine 171. N-linked (GlcNAc...) asparagine glycosylation is found at asparagine 180, asparagine 190, and asparagine 294. A helical membrane pass occupies residues 326–346; that stretch reads GIAYITIGSISFLLGVVLLVI. Over 347–361 the chain is Cytoplasmic; the sequence is NHKYRNSSNTADITI.

This sequence belongs to the CDC50/LEM3 family. As to quaternary structure, component of various P4-ATPase flippase complexes which consists of a catalytic alpha subunit and an accessory beta subunit. Interacts with ATP8A1 to form a flippase complex; this complex forms an intermediate phosphoenzyme. Interacts with ATP8A2 to form a flippase complex. ATP8B1:TMEM30A and ATP8B2:TMEM30A flippase complexes have been shown to form intermediate phosphoenzymes in vitro. Interacts with alpha subunits ATP8A1, ATP8B1, ATP8B2, ATP8B4, ATP10A, ATP10B, ATP10D, ATP11A, ATP11B and ATP11C. In terms of processing, N-glycosylated; contributes to ATP8A2:TMEM30A flippase complex assembly but not to functional activity. In terms of tissue distribution, expressed in photoreceptor cells; detected in retina outer segment and other retinal layers (at protein level).

It is found in the membrane. Its subcellular location is the golgi apparatus. The protein localises to the cytoplasmic vesicle. It localises to the secretory vesicle membrane. The protein resides in the apical cell membrane. It is found in the photoreceptor inner segment. Its subcellular location is the cell projection. The protein localises to the cilium. It localises to the photoreceptor outer segment. Accessory component of a P4-ATPase flippase complex which catalyzes the hydrolysis of ATP coupled to the transport of aminophospholipids from the outer to the inner leaflet of various membranes and ensures the maintenance of asymmetric distribution of phospholipids. Phospholipid translocation also seems to be implicated in vesicle formation and in uptake of lipid signaling molecules. The beta subunit may assist in binding of the phospholipid substrate. Required for the proper folding, assembly and ER to Golgi exit of the ATP8A2:TMEM30A flippase complex. ATP8A2:TMEM30A may be involved in regulation of neurite outgrowth, and, reconstituted to liposomes, predomiminantly transports phosphatidylserine (PS) and to a lesser extent phosphatidylethanolamine (PE). The ATP8A1:TMEM30A flippase complex seems to play a role in regulation of cell migration probably involving flippase-mediated translocation of phosphatidylethanolamine (PE) at the plasma membrane. Required for the formation of the ATP8A2, ATP8B1 and ATP8B2 P-type ATPAse intermediate phosphoenzymes. Involved in uptake of platelet-activating factor (PAF). Can also mediate the export of alpha subunits ATP8A1, ATP8B1, ATP8B2, ATP8B4, ATP10A, ATP10B, ATP10D, ATP11A, ATP11B and ATP11C from the ER to other membrane localizations. This chain is Cell cycle control protein 50A, found in Bos taurus (Bovine).